The chain runs to 157 residues: Ribonuclease H (157 aa).

The RNase H type-1 domain occupies 1 to 146 (MPELFAYTDG…ADALAREGMA (146 aa)). Asp9, Glu52, Asp74, and Asp138 together coordinate Mg(2+).

The protein belongs to the RNase H family. As to quaternary structure, monomer. It depends on Mg(2+) as a cofactor.

It is found in the cytoplasm. The catalysed reaction is Endonucleolytic cleavage to 5'-phosphomonoester.. Endonuclease that specifically degrades the RNA of RNA-DNA hybrids. This is Ribonuclease H from Dinoroseobacter shibae (strain DSM 16493 / NCIMB 14021 / DFL 12).